The primary structure comprises 1040 residues: Multidrug resistance protein MdtB (1040 aa).

Helical transmembrane passes span 25–45, 342–362, 369–389, 396–416, 440–460, 472–492, 537–557, 863–883, 888–908, 911–931, 967–987, and 998–1018; these read LLMV…PVAA, DTQF…YLFL, IIPG…MVFL, LTLM…IVVI, IGFT…PLLF, FAVT…TLTP, WLTL…WVFI, LGST…VLGV, FIHP…ALLA, IAGS…IGIV, PILM…LSTG, and IGMV…TPVI.

The protein belongs to the resistance-nodulation-cell division (RND) (TC 2.A.6) family. MdtB subfamily. In terms of assembly, part of a tripartite efflux system composed of MdtA, MdtB and MdtC. MdtB forms a heteromultimer with MdtC.

Its subcellular location is the cell inner membrane. The chain is Multidrug resistance protein MdtB from Citrobacter koseri (strain ATCC BAA-895 / CDC 4225-83 / SGSC4696).